The primary structure comprises 179 residues: MAKLHDYYKDEVVKKLMTEFNYNSVMQVPRVEKITLNMGVGEAIADKKLLDNAAADLTAISGQKPLITKARKSVAGFKIRQGYPIGCKVTLRGERMWEFLERLISIAVPRIRDFRGLSAKSFDGRGNYSMGVREQIIFPEIDYDKVDRVRGLDITITTTAKSDDEGRALLAAFNFPFRK.

Belongs to the universal ribosomal protein uL5 family. As to quaternary structure, part of the 50S ribosomal subunit; part of the 5S rRNA/L5/L18/L25 subcomplex. Contacts the 5S rRNA and the P site tRNA. Forms a bridge to the 30S subunit in the 70S ribosome.

In terms of biological role, this is one of the proteins that bind and probably mediate the attachment of the 5S RNA into the large ribosomal subunit, where it forms part of the central protuberance. In the 70S ribosome it contacts protein S13 of the 30S subunit (bridge B1b), connecting the 2 subunits; this bridge is implicated in subunit movement. Contacts the P site tRNA; the 5S rRNA and some of its associated proteins might help stabilize positioning of ribosome-bound tRNAs. The chain is Large ribosomal subunit protein uL5 from Pectobacterium atrosepticum (strain SCRI 1043 / ATCC BAA-672) (Erwinia carotovora subsp. atroseptica).